Consider the following 65-residue polypeptide: ATP synthase F(0) complex subunit 8 (65 aa).

A helical transmembrane segment spans residues 8–24 (TWLTTILSMFLALFIIF). Lys-53 is modified (N6-acetyllysine; alternate). Lys-53 carries the N6-succinyllysine; alternate modification. An N6-acetyllysine modification is found at Lys-56.

This sequence belongs to the ATPase protein 8 family. As to quaternary structure, component of the ATP synthase complex composed at least of ATP5F1A/subunit alpha, ATP5F1B/subunit beta, ATP5MC1/subunit c (homooctomer), MT-ATP6/subunit a, MT-ATP8/subunit 8, ATP5ME/subunit e, ATP5MF/subunit f, ATP5MG/subunit g, ATP5MK/subunit k, ATP5MJ/subunit j, ATP5F1C/subunit gamma, ATP5F1D/subunit delta, ATP5F1E/subunit epsilon, ATP5PF/subunit F6, ATP5PB/subunit b, ATP5PD/subunit d, ATP5PO/subunit OSCP. ATP synthase complex consists of a soluble F(1) head domain (subunits alpha(3) and beta(3)) - the catalytic core - and a membrane F(0) domain - the membrane proton channel (subunits c, a, 8, e, f, g, k and j). These two domains are linked by a central stalk (subunits gamma, delta, and epsilon) rotating inside the F1 region and a stationary peripheral stalk (subunits F6, b, d, and OSCP). Interacts with PRICKLE3.

The protein resides in the mitochondrion membrane. Subunit 8, of the mitochondrial membrane ATP synthase complex (F(1)F(0) ATP synthase or Complex V) that produces ATP from ADP in the presence of a proton gradient across the membrane which is generated by electron transport complexes of the respiratory chain. ATP synthase complex consist of a soluble F(1) head domain - the catalytic core - and a membrane F(1) domain - the membrane proton channel. These two domains are linked by a central stalk rotating inside the F(1) region and a stationary peripheral stalk. During catalysis, ATP synthesis in the catalytic domain of F(1) is coupled via a rotary mechanism of the central stalk subunits to proton translocation. In vivo, can only synthesize ATP although its ATP hydrolase activity can be activated artificially in vitro. Part of the complex F(0) domain. The sequence is that of ATP synthase F(0) complex subunit 8 from Capra ibex ibex (Alpine ibex).